The primary structure comprises 78 residues: Cytochrome c-551 (78 aa).

Heme c contacts are provided by Cys14, Cys17, His18, and Met55.

In terms of processing, binds 1 heme c group covalently per subunit.

The polypeptide is Cytochrome c-551 (Halorhodospira halophila (Ectothiorhodospira halophila)).